A 572-amino-acid polypeptide reads, in one-letter code: Glutamate--tRNA ligase (572 aa).

The 'HIGH' region signature appears at 112-122 (PNPNGPPSLGN).

This sequence belongs to the class-I aminoacyl-tRNA synthetase family. Glutamate--tRNA ligase type 2 subfamily.

It localises to the cytoplasm. It catalyses the reaction tRNA(Glu) + L-glutamate + ATP = L-glutamyl-tRNA(Glu) + AMP + diphosphate. In terms of biological role, catalyzes the attachment of glutamate to tRNA(Glu) in a two-step reaction: glutamate is first activated by ATP to form Glu-AMP and then transferred to the acceptor end of tRNA(Glu). In Methanocella arvoryzae (strain DSM 22066 / NBRC 105507 / MRE50), this protein is Glutamate--tRNA ligase.